Reading from the N-terminus, the 165-residue chain is Ribosome maturation factor RimM (165 aa).

The PRC barrel domain occupies 89–161 (EADTHYVVDL…KIVIKPVRQW (73 aa)).

This sequence belongs to the RimM family. As to quaternary structure, binds ribosomal protein uS19.

The protein resides in the cytoplasm. An accessory protein needed during the final step in the assembly of 30S ribosomal subunit, possibly for assembly of the head region. Essential for efficient processing of 16S rRNA. May be needed both before and after RbfA during the maturation of 16S rRNA. It has affinity for free ribosomal 30S subunits but not for 70S ribosomes. This is Ribosome maturation factor RimM from Clostridium botulinum (strain Eklund 17B / Type B).